Consider the following 119-residue polypeptide: Large ribosomal subunit protein uL24 (119 aa).

It belongs to the universal ribosomal protein uL24 family. As to quaternary structure, part of the 50S ribosomal subunit.

One of two assembly initiator proteins, it binds directly to the 5'-end of the 23S rRNA, where it nucleates assembly of the 50S subunit. Its function is as follows. Located at the polypeptide exit tunnel on the outside of the subunit. The sequence is that of Large ribosomal subunit protein uL24 from Saccharolobus solfataricus (strain ATCC 35092 / DSM 1617 / JCM 11322 / P2) (Sulfolobus solfataricus).